A 243-amino-acid chain; its full sequence is Ubiquinone/menaquinone biosynthesis C-methyltransferase UbiE (243 aa).

S-adenosyl-L-methionine contacts are provided by residues Thr69, Asp90, and 116 to 117; that span reads DA.

The protein belongs to the class I-like SAM-binding methyltransferase superfamily. MenG/UbiE family.

The catalysed reaction is a 2-demethylmenaquinol + S-adenosyl-L-methionine = a menaquinol + S-adenosyl-L-homocysteine + H(+). It carries out the reaction a 2-methoxy-6-(all-trans-polyprenyl)benzene-1,4-diol + S-adenosyl-L-methionine = a 5-methoxy-2-methyl-3-(all-trans-polyprenyl)benzene-1,4-diol + S-adenosyl-L-homocysteine + H(+). It participates in quinol/quinone metabolism; menaquinone biosynthesis; menaquinol from 1,4-dihydroxy-2-naphthoate: step 2/2. It functions in the pathway cofactor biosynthesis; ubiquinone biosynthesis. Methyltransferase required for the conversion of demethylmenaquinol (DMKH2) to menaquinol (MKH2) and the conversion of 2-polyprenyl-6-methoxy-1,4-benzoquinol (DDMQH2) to 2-polyprenyl-3-methyl-6-methoxy-1,4-benzoquinol (DMQH2). The polypeptide is Ubiquinone/menaquinone biosynthesis C-methyltransferase UbiE (Cupriavidus pinatubonensis (strain JMP 134 / LMG 1197) (Cupriavidus necator (strain JMP 134))).